A 222-amino-acid chain; its full sequence is Phosphoribosylformylglycinamidine synthase subunit PurQ (222 aa).

A Glutamine amidotransferase type-1 domain is found at 3 to 222; that stretch reads SAVIQLPGLN…LFESVLGRAA (220 aa). Catalysis depends on C86, which acts as the Nucleophile. Residues H196 and E198 contribute to the active site.

Part of the FGAM synthase complex composed of 1 PurL, 1 PurQ and 2 PurS subunits.

The protein localises to the cytoplasm. The enzyme catalyses N(2)-formyl-N(1)-(5-phospho-beta-D-ribosyl)glycinamide + L-glutamine + ATP + H2O = 2-formamido-N(1)-(5-O-phospho-beta-D-ribosyl)acetamidine + L-glutamate + ADP + phosphate + H(+). It catalyses the reaction L-glutamine + H2O = L-glutamate + NH4(+). It participates in purine metabolism; IMP biosynthesis via de novo pathway; 5-amino-1-(5-phospho-D-ribosyl)imidazole from N(2)-formyl-N(1)-(5-phospho-D-ribosyl)glycinamide: step 1/2. Functionally, part of the phosphoribosylformylglycinamidine synthase complex involved in the purines biosynthetic pathway. Catalyzes the ATP-dependent conversion of formylglycinamide ribonucleotide (FGAR) and glutamine to yield formylglycinamidine ribonucleotide (FGAM) and glutamate. The FGAM synthase complex is composed of three subunits. PurQ produces an ammonia molecule by converting glutamine to glutamate. PurL transfers the ammonia molecule to FGAR to form FGAM in an ATP-dependent manner. PurS interacts with PurQ and PurL and is thought to assist in the transfer of the ammonia molecule from PurQ to PurL. This chain is Phosphoribosylformylglycinamidine synthase subunit PurQ, found in Chelativorans sp. (strain BNC1).